Here is an 89-residue protein sequence, read N- to C-terminus: Small ribosomal subunit protein uS15 (89 aa).

It belongs to the universal ribosomal protein uS15 family. In terms of assembly, part of the 30S ribosomal subunit. Forms a bridge to the 50S subunit in the 70S ribosome, contacting the 23S rRNA.

Functionally, one of the primary rRNA binding proteins, it binds directly to 16S rRNA where it helps nucleate assembly of the platform of the 30S subunit by binding and bridging several RNA helices of the 16S rRNA. In terms of biological role, forms an intersubunit bridge (bridge B4) with the 23S rRNA of the 50S subunit in the ribosome. The protein is Small ribosomal subunit protein uS15 of Exiguobacterium sp. (strain ATCC BAA-1283 / AT1b).